We begin with the raw amino-acid sequence, 82 residues long: Cyclin-dependent protein kinase inhibitor SMR5 (82 aa).

Positions 1–26 are disordered; it reads MEEKNYDDGDTVTVDDDYQMGCTTPT. Positions 8–18 are enriched in acidic residues; that stretch reads DGDTVTVDDDY.

In terms of assembly, interacts with CDKA-1 and D-type cyclins. Expressed in columella cells in the roots and in root meristems after induction.

Its function is as follows. Probable cyclin-dependent protein kinase (CDK) inhibitor that functions as a repressor of mitosis in the endoreduplication cell cycle. Acts as a potent cell cycle inhibitor, regulating a hydroxyurea-dependent checkpoint in leaves. Essential to activate a high-light-dependent cell cycle checkpoint. The protein is Cyclin-dependent protein kinase inhibitor SMR5 of Arabidopsis thaliana (Mouse-ear cress).